Reading from the N-terminus, the 458-residue chain is Monomethylamine methyltransferase MtmB2 (458 aa).

Residue Pyl-202 is a non-standard amino acid, pyrrolysine.

It belongs to the monomethylamine methyltransferase family. In terms of assembly, can form a complex with MtmC.

The catalysed reaction is Co(I)-[methylamine-specific corrinoid protein] + methylamine + H(+) = methyl-Co(III)-[methylamine-specific corrinoid protein] + NH4(+). It functions in the pathway one-carbon metabolism; methanogenesis from methylamine. Its function is as follows. Catalyzes the transfer of the methyl group from monomethylamine to the corrinoid cofactor of MtmC. The protein is Monomethylamine methyltransferase MtmB2 (mtmB2) of Methanosarcina acetivorans (strain ATCC 35395 / DSM 2834 / JCM 12185 / C2A).